A 1116-amino-acid polypeptide reads, in one-letter code: Surface layer protein (1116 aa).

Positions 1-53 (MQDSGFKKKDRSTNIPQEQFVYTRGGEHKVMKKVVNSVLASALAITVAPMAFA) are cleaved as a signal peptide. SLH domains follow at residues 54 to 117 (AEDT…KLAQ), 118 to 181 (FNTT…RGVW), and 182 to 231 (PNSM…YGTD).

It localises to the secreted. It is found in the cell wall. The protein resides in the S-layer. The sequence is that of Surface layer protein from Brevibacillus choshinensis.